Reading from the N-terminus, the 289-residue chain is Ribonuclease Z (289 aa).

Positions 63, 65, 67, 68, 143, 197, and 255 each coordinate Zn(2+). The Proton acceptor role is filled by Asp-67.

This sequence belongs to the RNase Z family. In terms of assembly, homodimer. Requires Zn(2+) as cofactor.

The catalysed reaction is Endonucleolytic cleavage of RNA, removing extra 3' nucleotides from tRNA precursor, generating 3' termini of tRNAs. A 3'-hydroxy group is left at the tRNA terminus and a 5'-phosphoryl group is left at the trailer molecule.. Its function is as follows. Zinc phosphodiesterase, which displays some tRNA 3'-processing endonuclease activity. Probably involved in tRNA maturation, by removing a 3'-trailer from precursor tRNA. The chain is Ribonuclease Z from Azobacteroides pseudotrichonymphae genomovar. CFP2.